The sequence spans 166 residues: Deglycase PfpI (166 aa).

One can recognise a PfpI endopeptidase domain in the interval 1-166 (MKILFLSANE…WMREFVKLLK (166 aa)). Cys-100 (nucleophile) is an active-site residue. The active site involves His-101.

Belongs to the peptidase C56 family. As to quaternary structure, homooligomer. Exists in two functional species: the predominant form is a homohexamer that comprises about 90% of the total activity, and the minor form is trimeric.

It is found in the cytoplasm. It catalyses the reaction N(omega)-(1-hydroxy-2-oxopropyl)-L-arginyl-[protein] + H2O = lactate + L-arginyl-[protein] + H(+). The catalysed reaction is N(6)-(1-hydroxy-2-oxopropyl)-L-lysyl-[protein] + H2O = lactate + L-lysyl-[protein] + H(+). The enzyme catalyses S-(1-hydroxy-2-oxopropyl)-L-cysteinyl-[protein] + H2O = lactate + L-cysteinyl-[protein] + H(+). It carries out the reaction N(omega)-(1-hydroxy-2-oxoethyl)-L-arginyl-[protein] + H2O = L-arginyl-[protein] + glycolate + H(+). It catalyses the reaction N(6)-(1-hydroxy-2-oxoethyl)-L-lysyl-[protein] + H2O = glycolate + L-lysyl-[protein] + H(+). The catalysed reaction is S-(1-hydroxy-2-oxoethyl)-L-cysteinyl-[protein] + H2O = glycolate + L-cysteinyl-[protein] + H(+). Its function is as follows. Deglycase that catalyzes the deglycation of the Maillard adducts formed between amino groups of proteins and reactive carbonyl groups of glyoxals. Thus, functions as a protein deglycase that repairs methylglyoxal- and glyoxal-glycated proteins, and releases repaired proteins and lactate or glycolate, respectively. Deglycates cysteine, arginine and lysine residues in proteins, and thus reactivates these proteins by reversing glycation by glyoxals. Thus, was shown to afford full protection against glycation of thioredoxin by glyoxal. Acts on early glycation intermediates (hemithioacetals and aminocarbinols), preventing the formation of advanced glycation endproducts (AGE) that cause irreversible damage. Prevents acrylamide formation in asparagine/glyoxal and asparagine/sugar mixtures, likely by degrading asparagine/glyoxal Maillard adducts formed at high temperatures. Also displays proteolytic activity. Cleaves at the carboxyl side of both basic and hydrophobic residues in the P1 position, indicating trypsin- and chymotrypsin-like specificities. The protein is Deglycase PfpI of Pyrococcus furiosus (strain ATCC 43587 / DSM 3638 / JCM 8422 / Vc1).